A 523-amino-acid polypeptide reads, in one-letter code: Butyrophilin subfamily 2 member A2 (523 aa).

The signal sequence occupies residues 1 to 32; it reads MEPAAALHFSLPASLLLLLLLLLLSLCALVSA. Residues 33-265 lie on the Extracellular side of the membrane; that stretch reads QFTVVGPANP…AVILTASPWM (233 aa). The region spanning 34–145 is the Ig-like V-type domain; the sequence is FTVVGPANPI…SYDEAILRLV (112 aa). Residues N50, N118, N220, and N226 are each glycosylated (N-linked (GlcNAc...) asparagine). A disulfide bridge links C55 with C129. The region spanning 153 to 234 is the Ig-like C2-type domain; the sequence is PLIEIKAQED…VNNTLLGQEK (82 aa). A helical transmembrane segment spans residues 266-286; it reads VSMTVILAVFIIFMAVSICCI. Residues 286-321 adopt a coiled-coil conformation; sequence IKKLQREKKILSGEKKVEQEEKEIAQQLQEELRWRR. The Cytoplasmic segment spans residues 287-523; that stretch reads KKLQREKKIL…LHRVGTHQSL (237 aa). The B30.2/SPRY domain maps to 309 to 502; that stretch reads IAQQLQEELR…IFICPALTGA (194 aa).

Belongs to the immunoglobulin superfamily. BTN/MOG family. Post-translationally, N-glycosylated. Highly expressed in brain, bone marrow, small intestine, muscle, spleen and pancreas. Moderate expression was seen in lung, liver and kidney.

The protein resides in the membrane. In terms of biological role, inhibits the proliferation of CD4 and CD8 T-cells activated by anti-CD3 antibodies, T-cell metabolism and IL2 and IFNG secretion. The chain is Butyrophilin subfamily 2 member A2 (BTN2A2) from Homo sapiens (Human).